The following is a 434-amino-acid chain: Enolase 2 (434 aa).

Q171 serves as a coordination point for (2R)-2-phosphoglycerate. E213 serves as the catalytic Proton donor. Mg(2+) is bound by residues D250, E293, and D320. Residues K345, R374, S375, and K396 each coordinate (2R)-2-phosphoglycerate. K345 functions as the Proton acceptor in the catalytic mechanism.

The protein belongs to the enolase family. Mg(2+) serves as cofactor.

Its subcellular location is the cytoplasm. It is found in the secreted. The protein localises to the cell surface. The enzyme catalyses (2R)-2-phosphoglycerate = phosphoenolpyruvate + H2O. It functions in the pathway carbohydrate degradation; glycolysis; pyruvate from D-glyceraldehyde 3-phosphate: step 4/5. Catalyzes the reversible conversion of 2-phosphoglycerate (2-PG) into phosphoenolpyruvate (PEP). It is essential for the degradation of carbohydrates via glycolysis. The chain is Enolase 2 from Streptomyces coelicolor (strain ATCC BAA-471 / A3(2) / M145).